We begin with the raw amino-acid sequence, 501 residues long: GMP synthase [glutamine-hydrolyzing] (501 aa).

The region spanning 1–185 (MVLVVDYGSQ…LFNVCKLEKN (185 aa)) is the Glutamine amidotransferase type-1 domain. Cys-75 acts as the Nucleophile in catalysis. Active-site residues include His-159 and Glu-161. In terms of domain architecture, GMPS ATP-PPase spans 186–376 (WKIGDLVEEK…LGIPDRIINR (191 aa)). 213–219 (SGGVDSS) is a binding site for ATP.

In terms of assembly, homodimer.

It catalyses the reaction XMP + L-glutamine + ATP + H2O = GMP + L-glutamate + AMP + diphosphate + 2 H(+). The protein operates within purine metabolism; GMP biosynthesis; GMP from XMP (L-Gln route): step 1/1. Catalyzes the synthesis of GMP from XMP. The polypeptide is GMP synthase [glutamine-hydrolyzing] (guaA) (Thermotoga maritima (strain ATCC 43589 / DSM 3109 / JCM 10099 / NBRC 100826 / MSB8)).